The following is a 201-amino-acid chain: Glycerol-3-phosphate acyltransferase (201 aa).

Transmembrane regions (helical) follow at residues 5-25, 55-75, 88-108, 118-138, and 164-184; these read LLGALLVAAGYLAGSIPFGVV, KMGVLVLVLDAAKAIVPILVA, WVTAVAVAAFVGHLFPVWLGF, LGIFAVLAPWAALAGLVGYAV, and TYGPRHPISWAGLAIALLIFL.

Belongs to the PlsY family. As to quaternary structure, probably interacts with PlsX.

The protein resides in the cell inner membrane. The enzyme catalyses an acyl phosphate + sn-glycerol 3-phosphate = a 1-acyl-sn-glycero-3-phosphate + phosphate. It functions in the pathway lipid metabolism; phospholipid metabolism. Functionally, catalyzes the transfer of an acyl group from acyl-phosphate (acyl-PO(4)) to glycerol-3-phosphate (G3P) to form lysophosphatidic acid (LPA). This enzyme utilizes acyl-phosphate as fatty acyl donor, but not acyl-CoA or acyl-ACP. This Anaeromyxobacter sp. (strain K) protein is Glycerol-3-phosphate acyltransferase.